A 925-amino-acid chain; its full sequence is Calpain-B (925 aa).

Residues 259–558 (MFEDPDFPAT…FDRVEICNLS (300 aa)) form the Calpain catalytic domain. Residues C314, H470, and N498 contribute to the active site. Residues 559-728 (PDSLTEDQQH…TRNNMEENDD (170 aa)) are domain III. The disordered stretch occupies residues 723–753 (MEENDDEVGFGETDDRIAPSLPPPTPKEEDD). The linker stretch occupies residues 729–748 (EVGFGETDDRIAPSLPPPTP). The tract at residues 749 to 925 (KEEDDPQRIA…DDWLERTIYS (177 aa)) is domain IV. 2 EF-hand domains span residues 796-831 (FSKD…IAKW) and 826-861 (TDIA…AGYH). Ca(2+) contacts are provided by D809, D811, S813, R815, E820, D839, T843, S845, and H850.

The protein belongs to the peptidase C2 family. In terms of processing, undergoes calcium-dependent autolytic cleavage between Asn-74 and Ala-75 and between Gln-224 and Asn-225 to produce two major products, calpain B catalytic subunit 1 and calpain B catalytic subunit 2. This autolysis is necessary for activation of the protein. In terms of tissue distribution, strongly expressed in follicular and border cells of the oocyte. Ubiquitously expressed in early embryos. Localized to the trachea and their orifices, and to the larynx of late embryos. Restricted to the salivary gland in third instar larvae.

It is found in the cytoplasm. The protein resides in the membrane. Its activity is regulated as follows. Activated by millimolar concentrations of calcium. Calcium-regulated non-lysosomal thiol-protease. In Drosophila melanogaster (Fruit fly), this protein is Calpain-B.